Here is a 399-residue protein sequence, read N- to C-terminus: Elongation factor Tu (399 aa).

The region spanning 10 to 209 (KPHVNIGTIG…AVDEYIPTPE (200 aa)) is the tr-type G domain. Residues 19-26 (GHVDHGKT) form a G1 region. 19 to 26 (GHVDHGKT) serves as a coordination point for GTP. T26 is a binding site for Mg(2+). Positions 60-64 (GITIN) are G2. Residues 81-84 (DCPG) are G3. Residues 81–85 (DCPGH) and 136–139 (NKMD) contribute to the GTP site. A G4 region spans residues 136 to 139 (NKMD). The G5 stretch occupies residues 174-176 (SAL).

It belongs to the TRAFAC class translation factor GTPase superfamily. Classic translation factor GTPase family. EF-Tu/EF-1A subfamily. As to quaternary structure, monomer.

Its subcellular location is the cytoplasm. It catalyses the reaction GTP + H2O = GDP + phosphate + H(+). Its function is as follows. GTP hydrolase that promotes the GTP-dependent binding of aminoacyl-tRNA to the A-site of ribosomes during protein biosynthesis. This is Elongation factor Tu from Nautilia profundicola (strain ATCC BAA-1463 / DSM 18972 / AmH).